A 204-amino-acid polypeptide reads, in one-letter code: MSKAIILNNELQKNGEVALPERFKEIHSHNLYLYVKSYLASLRANSAKAKKRGEVSGGGKKPWSQKGGGRARAGSITSPVFVGGGVSHGPSNNRNYDLKVNKKQKKLALQYALMEKAEQGKLYVVDSLQVDSGKTKDAYAMFKTLNERSTLFVSQISDEKTFLAFRNLKECYLADANELNAYLVAAFRSVVIEKSLFENITKEG.

The disordered stretch occupies residues 49 to 74 (AKKRGEVSGGGKKPWSQKGGGRARAG). Residues 55–71 (VSGGGKKPWSQKGGGRA) show a composition bias toward gly residues.

Belongs to the universal ribosomal protein uL4 family. In terms of assembly, part of the 50S ribosomal subunit.

Its function is as follows. One of the primary rRNA binding proteins, this protein initially binds near the 5'-end of the 23S rRNA. It is important during the early stages of 50S assembly. It makes multiple contacts with different domains of the 23S rRNA in the assembled 50S subunit and ribosome. In terms of biological role, forms part of the polypeptide exit tunnel. This is Large ribosomal subunit protein uL4 from Wolinella succinogenes (strain ATCC 29543 / DSM 1740 / CCUG 13145 / JCM 31913 / LMG 7466 / NCTC 11488 / FDC 602W) (Vibrio succinogenes).